The chain runs to 813 residues: Leucine--tRNA ligase (813 aa).

Residues 41–51 (PYPSGTLHMGH) carry the 'HIGH' region motif. Positions 575-579 (KMSKS) match the 'KMSKS' region motif. Lysine 578 is an ATP binding site.

Belongs to the class-I aminoacyl-tRNA synthetase family.

The protein localises to the cytoplasm. It catalyses the reaction tRNA(Leu) + L-leucine + ATP = L-leucyl-tRNA(Leu) + AMP + diphosphate. This is Leucine--tRNA ligase from Francisella tularensis subsp. tularensis (strain FSC 198).